A 270-amino-acid polypeptide reads, in one-letter code: Phosphatidylglycerol--prolipoprotein diacylglyceryl transferase (270 aa).

The next 4 membrane-spanning stretches (helical) occupy residues 18–38 (ITIYWYGVIIGTGVLIGLWLA), 55–75 (LVLFAVPIAIVCARAYYVLFE), 90–110 (WQGGLAIHGGLIGAVATGAVF), and 115–135 (GLSFWKLADIAAPSIILGQAI). R137 contributes to the a 1,2-diacyl-sn-glycero-3-phospho-(1'-sn-glycerol) binding site. A run of 3 helical transmembrane segments spans residues 177 to 197 (HPTFLYESLWNLVGFFLLLWL), 205 to 225 (GELFLSYLIWYSVGRFWIEGM), and 236 to 256 (LRAAQVVSVTLIVLSIALWIV).

This sequence belongs to the Lgt family.

Its subcellular location is the cell membrane. The enzyme catalyses L-cysteinyl-[prolipoprotein] + a 1,2-diacyl-sn-glycero-3-phospho-(1'-sn-glycerol) = an S-1,2-diacyl-sn-glyceryl-L-cysteinyl-[prolipoprotein] + sn-glycerol 1-phosphate + H(+). The protein operates within protein modification; lipoprotein biosynthesis (diacylglyceryl transfer). In terms of biological role, catalyzes the transfer of the diacylglyceryl group from phosphatidylglycerol to the sulfhydryl group of the N-terminal cysteine of a prolipoprotein, the first step in the formation of mature lipoproteins. In Geobacillus kaustophilus (strain HTA426), this protein is Phosphatidylglycerol--prolipoprotein diacylglyceryl transferase.